The sequence spans 277 residues: Bis(5'-nucleosyl)-tetraphosphatase, symmetrical (277 aa).

Belongs to the Ap4A hydrolase family.

It carries out the reaction P(1),P(4)-bis(5'-adenosyl) tetraphosphate + H2O = 2 ADP + 2 H(+). Hydrolyzes diadenosine 5',5'''-P1,P4-tetraphosphate to yield ADP. The sequence is that of Bis(5'-nucleosyl)-tetraphosphatase, symmetrical from Azotobacter vinelandii (strain DJ / ATCC BAA-1303).